The chain runs to 428 residues: Kynureninase (428 aa).

Pyridoxal 5'-phosphate-binding positions include T104, T105, 132–135 (FPSD), D213, H216, and Y238. K239 carries the N6-(pyridoxal phosphate)lysine modification. Residues W267 and T295 each contribute to the pyridoxal 5'-phosphate site.

It belongs to the kynureninase family. As to quaternary structure, homodimer. It depends on pyridoxal 5'-phosphate as a cofactor.

It catalyses the reaction L-kynurenine + H2O = anthranilate + L-alanine + H(+). The enzyme catalyses 3-hydroxy-L-kynurenine + H2O = 3-hydroxyanthranilate + L-alanine + H(+). Its pathway is amino-acid degradation; L-kynurenine degradation; L-alanine and anthranilate from L-kynurenine: step 1/1. It functions in the pathway cofactor biosynthesis; NAD(+) biosynthesis; quinolinate from L-kynurenine: step 2/3. Catalyzes the cleavage of L-kynurenine (L-Kyn) and L-3-hydroxykynurenine (L-3OHKyn) into anthranilic acid (AA) and 3-hydroxyanthranilic acid (3-OHAA), respectively. This chain is Kynureninase, found in Bacillus cereus (strain ATCC 14579 / DSM 31 / CCUG 7414 / JCM 2152 / NBRC 15305 / NCIMB 9373 / NCTC 2599 / NRRL B-3711).